Reading from the N-terminus, the 221-residue chain is Protein lethal(2)k10201 (221 aa).

C2H2-type zinc fingers lie at residues 74–97 (YSCV…TEQH) and 113–138 (FSCF…IITH). The segment at 146–168 (FDHSKNRGKQKHQGKSKPNSMEV) is disordered. Positions 151–160 (NRGKQKHQGK) are enriched in basic residues.

Vital for development. The polypeptide is Protein lethal(2)k10201 (l(2)k10201) (Drosophila melanogaster (Fruit fly)).